We begin with the raw amino-acid sequence, 650 residues long: Transcription factor LHW (650 aa).

2 disordered regions span residues 381–417 (LTKVSNSSVTTPSHSSPQGSQLFEKKHGQPLGPSSVY) and 431–470 (LKREGSPRMVNKNETAKPANNRKRLKPGENPRPRPKDRQM). Residues 384-397 (VSNSSVTTPSHSSP) show a composition bias toward low complexity. The short motif at 451–458 (NRKRLKPG) is the Nuclear localization signal element. The region spanning 455-504 (LKPGENPRPRPKDRQMIQDRVKELREIIPNGAKCSIDALLERTIKHMLFL) is the bHLH domain. The span at 456–470 (KPGENPRPRPKDRQM) shows a compositional bias: basic and acidic residues.

It belongs to the bHLH protein family. LHW subfamily. In terms of assembly, homodimer. Can also interact with bHLH proteins. Expressed in both root and shoot meristems. Present in root tips.

It is found in the nucleus. Its function is as follows. Transcription activator that regulates root development; promotes the production of stele cells in roots. Coordinately controls the number of all vascular cell types by regulating the size of the pool of cells from which they arise. This is Transcription factor LHW (LHW) from Arabidopsis thaliana (Mouse-ear cress).